The chain runs to 438 residues: Mitochondrial distribution and morphology protein 12 (438 aa).

Residues 1–438 enclose the SMP-LTD domain; the sequence is MSIEVDWAAA…VYPSFWTFLV (438 aa). Disordered regions lie at residues 110-154, 185-277, and 353-379; these read SFSH…TSTL, SDSG…MRER, and GSEQ…KDKE. Residues 212 to 226 are compositionally biased toward polar residues; it reads DTTNSTSRPSTANTL. Positions 227 to 245 are enriched in low complexity; the sequence is PSHPSLGHSGSSGSNPHTS. The segment covering 354-364 has biased composition (polar residues); the sequence is SEQSQGSQNPS. Residues 365–379 show a composition bias toward basic and acidic residues; the sequence is DDGRPRSGGDQKDKE.

Belongs to the MDM12 family. Component of the ER-mitochondria encounter structure (ERMES) or MDM complex, composed of mmm1, mdm10, mdm12 and mdm34. A mmm1 homodimer associates with one molecule of mdm12 on each side in a pairwise head-to-tail manner, and the SMP-LTD domains of mmm1 and mdm12 generate a continuous hydrophobic tunnel for phospholipid trafficking.

Its subcellular location is the mitochondrion outer membrane. The protein localises to the endoplasmic reticulum membrane. Its function is as follows. Component of the ERMES/MDM complex, which serves as a molecular tether to connect the endoplasmic reticulum (ER) and mitochondria. Components of this complex are involved in the control of mitochondrial shape and protein biogenesis, and function in nonvesicular lipid trafficking between the ER and mitochondria. Mdm12 is required for the interaction of the ER-resident membrane protein mmm1 and the outer mitochondrial membrane-resident beta-barrel protein mdm10. The mdm12-mmm1 subcomplex functions in the major beta-barrel assembly pathway that is responsible for biogenesis of all mitochondrial outer membrane beta-barrel proteins, and acts in a late step after the SAM complex. The mdm10-mdm12-mmm1 subcomplex further acts in the TOM40-specific pathway after the action of the mdm12-mmm1 complex. Essential for establishing and maintaining the structure of mitochondria and maintenance of mtDNA nucleoids. The polypeptide is Mitochondrial distribution and morphology protein 12 (Penicillium rubens (strain ATCC 28089 / DSM 1075 / NRRL 1951 / Wisconsin 54-1255) (Penicillium chrysogenum)).